A 446-amino-acid chain; its full sequence is Homocitrate synthase, mitochondrial (446 aa).

Over residues 1–14 (MCATDNAPAANAAP) the composition is skewed to low complexity. Residues 1-36 (MCATDNAPAANAAPEKPSNVGVEVGHTGEQTNPYGA) are disordered. One can recognise a Pyruvate carboxyltransferase domain in the interval 48 to 307 (FQLIESTLRE…HKLRDLENLV (260 aa)). Arg56 provides a ligand contact to 2-oxoglutarate. Position 57 (Glu57) interacts with Mg(2+). 2-oxoglutarate contacts are provided by His116, Arg176, and Thr210. Mg(2+) contacts are provided by His237 and His239. His334 functions as the Proton acceptor in the catalytic mechanism. The tract at residues 422 to 446 (TPTVAATEGPAVEDEPAAKKAKTEE) is disordered. Residues 437-446 (PAAKKAKTEE) are compositionally biased toward basic and acidic residues.

The protein belongs to the alpha-IPM synthase/homocitrate synthase family. Homocitrate synthase LYS20/LYS21 subfamily. Mg(2+) serves as cofactor. It depends on Mn(2+) as a cofactor.

It is found in the mitochondrion. The catalysed reaction is acetyl-CoA + 2-oxoglutarate + H2O = (2R)-homocitrate + CoA + H(+). It participates in amino-acid biosynthesis; L-lysine biosynthesis via AAA pathway; L-alpha-aminoadipate from 2-oxoglutarate: step 1/5. In terms of biological role, catalyzes the aldol-type condensation of 2-oxoglutarate with acetyl-CoA to yield homocitrate. Carries out the first step of the alpha-aminoadipate (AAA) lysine biosynthesis pathway. This chain is Homocitrate synthase, mitochondrial (LYS1), found in Yarrowia lipolytica (strain CLIB 122 / E 150) (Yeast).